The sequence spans 173 residues: NADH-ubiquinone oxidoreductase chain 6 (173 aa).

5 helical membrane passes run 1–21 (MTYL…AVAS), 24–44 (APYF…GVLV), 53–73 (LVLF…SAAL), 87–107 (VLGY…LFWG), and 141–161 (GGML…VLEL).

The protein belongs to the complex I subunit 6 family.

Its subcellular location is the mitochondrion membrane. It carries out the reaction a ubiquinone + NADH + 5 H(+)(in) = a ubiquinol + NAD(+) + 4 H(+)(out). Core subunit of the mitochondrial membrane respiratory chain NADH dehydrogenase (Complex I) that is believed to belong to the minimal assembly required for catalysis. Complex I functions in the transfer of electrons from NADH to the respiratory chain. The immediate electron acceptor for the enzyme is believed to be ubiquinone. The protein is NADH-ubiquinone oxidoreductase chain 6 (MT-ND6) of Oncorhynchus mykiss (Rainbow trout).